A 546-amino-acid polypeptide reads, in one-letter code: Cation/calcium exchanger 5 (546 aa).

13 consecutive transmembrane segments (helical) span residues 13-33 (ALCLTLISILIFFFLTTTTIP), 88-108 (NLFFSIPILSLLILLHFYILI), 134-154 (AVTLLALGNGAPDVFASVAAL), 163-183 (FGAILSAGTFVSAFVVGFVAI), 194-214 (SFVRDVLFYLIAALFLFYVYL), 218-238 (IFVWQAIGFVGFYIFFVGFVF), 323-343 (SANIVFCPFALLYTCNSFVQL), 356-376 (LPLWLVVLFMTSSLAFLHFTV), 388-408 (VIVVAFIMSVFWISTIAGELL), 423-445 (ALLGLTVLAWGNSVGDLVADVAV), 455-475 (MAGCFAGPMFNMLVGLGSALV), 492-512 (VGIVIAFVFLLLSLMGSLLVI), and 522-542 (FWGICLVGLYVAFTFVSLIIA).

This sequence belongs to the Ca(2+):cation antiporter (CaCA) (TC 2.A.19) family. Cation/calcium exchanger (CCX) subfamily.

It is found in the cell membrane. In terms of biological role, membrane-localized H(+)-dependent K(+) and Na(+) transporter. The protein is Cation/calcium exchanger 5 (CCX5) of Arabidopsis thaliana (Mouse-ear cress).